The chain runs to 244 residues: Proteasome subunit alpha (244 aa).

The protein belongs to the peptidase T1A family. As to quaternary structure, the 20S proteasome core is composed of 14 alpha and 14 beta subunits that assemble into four stacked heptameric rings, resulting in a barrel-shaped structure. The two inner rings, each composed of seven catalytic beta subunits, are sandwiched by two outer rings, each composed of seven alpha subunits. The catalytic chamber with the active sites is on the inside of the barrel. Has a gated structure, the ends of the cylinder being occluded by the N-termini of the alpha-subunits. Is capped by the proteasome-associated ATPase, ARC.

Its subcellular location is the cytoplasm. Its pathway is protein degradation; proteasomal Pup-dependent pathway. Its activity is regulated as follows. The formation of the proteasomal ATPase ARC-20S proteasome complex, likely via the docking of the C-termini of ARC into the intersubunit pockets in the alpha-rings, may trigger opening of the gate for substrate entry. Interconversion between the open-gate and close-gate conformations leads to a dynamic regulation of the 20S proteasome proteolysis activity. In terms of biological role, component of the proteasome core, a large protease complex with broad specificity involved in protein degradation. This Xylanimonas cellulosilytica (strain DSM 15894 / JCM 12276 / CECT 5975 / KCTC 9989 / LMG 20990 / NBRC 107835 / XIL07) protein is Proteasome subunit alpha.